We begin with the raw amino-acid sequence, 404 residues long: Cysteine desulfurase IscS (404 aa).

Residues 75 to 76 (AT), asparagine 155, glutamine 183, and 203 to 205 (SAH) each bind pyridoxal 5'-phosphate. At lysine 206 the chain carries N6-(pyridoxal phosphate)lysine. Threonine 243 serves as a coordination point for pyridoxal 5'-phosphate. Catalysis depends on cysteine 328, which acts as the Cysteine persulfide intermediate. Cysteine 328 contacts [2Fe-2S] cluster.

It belongs to the class-V pyridoxal-phosphate-dependent aminotransferase family. NifS/IscS subfamily. As to quaternary structure, homodimer. Forms a heterotetramer with IscU, interacts with other sulfur acceptors. Requires pyridoxal 5'-phosphate as cofactor.

It localises to the cytoplasm. It catalyses the reaction (sulfur carrier)-H + L-cysteine = (sulfur carrier)-SH + L-alanine. Its pathway is cofactor biosynthesis; iron-sulfur cluster biosynthesis. Master enzyme that delivers sulfur to a number of partners involved in Fe-S cluster assembly, tRNA modification or cofactor biosynthesis. Catalyzes the removal of elemental sulfur atoms from cysteine to produce alanine. Functions as a sulfur delivery protein for Fe-S cluster synthesis onto IscU, an Fe-S scaffold assembly protein, as well as other S acceptor proteins. The chain is Cysteine desulfurase IscS from Tolumonas auensis (strain DSM 9187 / NBRC 110442 / TA 4).